A 317-amino-acid chain; its full sequence is Glucokinase (317 aa).

Belongs to the ROK (NagC/XylR) family. In terms of assembly, homodimer. A divalent metal cation is required as a cofactor.

It catalyses the reaction D-glucose + ATP = D-glucose 6-phosphate + ADP + H(+). Functionally, catalyzes the phosphorylation of D-glucose to D-glucose 6-phosphate using ATP as the phosphate donor. Can also phosphorylate 2-deoxyglucose, with lower efficiency. ITP can also serve as a phosphoryl donor. The polypeptide is Glucokinase (Thermotoga maritima (strain ATCC 43589 / DSM 3109 / JCM 10099 / NBRC 100826 / MSB8)).